A 152-amino-acid chain; its full sequence is Large ribosomal subunit protein bL9 (152 aa).

The protein belongs to the bacterial ribosomal protein bL9 family.

Functionally, binds to the 23S rRNA. This Mycobacterium leprae (strain Br4923) protein is Large ribosomal subunit protein bL9.